A 121-amino-acid chain; its full sequence is General odorant-binding protein 72 (121 aa).

2 disulfide bridges follow: Cys45–Cys101 and Cys90–Cys110.

The protein belongs to the PBP/GOBP family.

Its subcellular location is the secreted. Functionally, present in the aqueous fluid surrounding olfactory sensory dendrites and are thought to aid in the capture and transport of hydrophobic odorants into and through this fluid. This Anopheles gambiae (African malaria mosquito) protein is General odorant-binding protein 72 (Obp72).